Here is a 380-residue protein sequence, read N- to C-terminus: Gonadotropin-releasing hormone II receptor (380 aa).

At 1–40 (MSAVNGTPWGSSAREEVWAGSGVEVEGSELPTFSTAAKVR) the chain is on the extracellular side. Residues 41 to 60 (VGVTIVLFVSSAGGNLAVLW) form a helical membrane-spanning segment. Over 61–76 (SVTRPQPSQLRPSPVR) the chain is Cytoplasmic. A helical transmembrane segment spans residues 77-96 (RLFAHLAAADLLVTFVVMPL). Residues 97–114 (DATWNITVQWLAGDIACR) are Extracellular-facing. A glycan (N-linked (GlcNAc...) asparagine) is linked at Asn101. An intrachain disulfide couples Cys113 to Cys188. Residues 115–136 (TLMFLKLMAMYAAAFLPVVIGL) form a helical membrane-spanning segment. Residues 137–160 (DRQAAVLNPLGSRSGVRKLLGAAW) are Cytoplasmic-facing. The chain crosses the membrane as a helical span at residues 161-178 (GLSFLLALPQLFLFHTVH). Residues 179 to 204 (RAGPVPFTQCATKGSFKARWQETTYN) lie on the Extracellular side of the membrane. Residues 205–224 (LFTFCCLFLLPLTAMAICYS) form a helical membrane-spanning segment. The Cytoplasmic segment spans residues 225–278 (RIVLGVSSPRTRKGSHAPAGEFALRRSFDNRPRVRLRALRLALLVLLTFILCWT). A helical membrane pass occupies residues 279-297 (PYYLLGLWYWFSPSMLSEV). Over 298-303 (PPSLSH) the chain is Extracellular. The chain crosses the membrane as a helical span at residues 304-323 (ILFLFGLLNAPLDPLLYGAF). Topologically, residues 324-380 (TLGCRRGHQELSMDSSREEGSRRMFQQDIQALRQTEVQKTVTSRKAGETKDIPITSI) are cytoplasmic.

Belongs to the G-protein coupled receptor 1 family. Phosphorylated on the C-terminal cytoplasmic tail.

The protein localises to the cell membrane. Its function is as follows. Receptor for gonadotropin releasing hormone II (GnRH II). This receptor mediates its action by association with G proteins that activate a phosphatidylinositol-calcium second messenger system. The sequence is that of Gonadotropin-releasing hormone II receptor (GNRHR2) from Callithrix jacchus (White-tufted-ear marmoset).